Reading from the N-terminus, the 123-residue chain is MAVTKEDVIDFIAGMSVLELSELIGEFEEKFGVSAAAPVAVAAAGVAAEAVEEKTEFDVILASAGSEKIKVIKEVRAITGLGLKEAKSLVESAPAALKEGVSKDEAAELKAKLEAVGATAEVK.

The protein belongs to the bacterial ribosomal protein bL12 family. In terms of assembly, homodimer. Part of the ribosomal stalk of the 50S ribosomal subunit. Forms a multimeric L10(L12)X complex, where L10 forms an elongated spine to which 2 to 4 L12 dimers bind in a sequential fashion. Binds GTP-bound translation factors.

Its function is as follows. Forms part of the ribosomal stalk which helps the ribosome interact with GTP-bound translation factors. Is thus essential for accurate translation. The protein is Large ribosomal subunit protein bL12 of Desulfotalea psychrophila (strain LSv54 / DSM 12343).